We begin with the raw amino-acid sequence, 315 residues long: Glycine--tRNA ligase alpha subunit (315 aa).

It belongs to the class-II aminoacyl-tRNA synthetase family. As to quaternary structure, tetramer of two alpha and two beta subunits.

The protein localises to the cytoplasm. It catalyses the reaction tRNA(Gly) + glycine + ATP = glycyl-tRNA(Gly) + AMP + diphosphate. The polypeptide is Glycine--tRNA ligase alpha subunit (Sorangium cellulosum (strain So ce56) (Polyangium cellulosum (strain So ce56))).